Reading from the N-terminus, the 72-residue chain is Translation initiation factor IF-1 (72 aa).

An S1-like domain is found at 1–72 (MAKEDNIEMQ…SKGRIVFRSR (72 aa)).

Belongs to the IF-1 family. Component of the 30S ribosomal translation pre-initiation complex which assembles on the 30S ribosome in the order IF-2 and IF-3, IF-1 and N-formylmethionyl-tRNA(fMet); mRNA recruitment can occur at any time during PIC assembly.

It localises to the cytoplasm. In terms of biological role, one of the essential components for the initiation of protein synthesis. Stabilizes the binding of IF-2 and IF-3 on the 30S subunit to which N-formylmethionyl-tRNA(fMet) subsequently binds. Helps modulate mRNA selection, yielding the 30S pre-initiation complex (PIC). Upon addition of the 50S ribosomal subunit IF-1, IF-2 and IF-3 are released leaving the mature 70S translation initiation complex. The polypeptide is Translation initiation factor IF-1 (Klebsiella pneumoniae subsp. pneumoniae (strain ATCC 700721 / MGH 78578)).